A 40-amino-acid chain; its full sequence is MSDTTGRIPLCLIGTVAGIAVIGLVGVFFYGSYSGLGSSL.

A helical transmembrane segment spans residues 8-28; it reads IPLCLIGTVAGIAVIGLVGVF.

The protein belongs to the PsbJ family. PSII is composed of 1 copy each of membrane proteins PsbA, PsbB, PsbC, PsbD, PsbE, PsbF, PsbH, PsbI, PsbJ, PsbK, PsbL, PsbM, PsbT, PsbX, PsbY, PsbZ, Psb30/Ycf12, at least 3 peripheral proteins of the oxygen-evolving complex and a large number of cofactors. It forms dimeric complexes.

Its subcellular location is the plastid. It localises to the chloroplast thylakoid membrane. Functionally, one of the components of the core complex of photosystem II (PSII). PSII is a light-driven water:plastoquinone oxidoreductase that uses light energy to abstract electrons from H(2)O, generating O(2) and a proton gradient subsequently used for ATP formation. It consists of a core antenna complex that captures photons, and an electron transfer chain that converts photonic excitation into a charge separation. This is Photosystem II reaction center protein J from Triticum aestivum (Wheat).